The primary structure comprises 213 residues: Glycerol-3-phosphate acyltransferase (213 aa).

Transmembrane regions (helical) follow at residues 2-22 (ITIV…GLWI), 52-74 (AGMA…PIIF), 81-100 (PLIF…FAGF), 112-132 (VIFG…FGAL), 143-163 (VTAS…GFIL), and 164-184 (SNYD…IIIR).

Belongs to the PlsY family. Probably interacts with PlsX.

The protein resides in the cell membrane. The enzyme catalyses an acyl phosphate + sn-glycerol 3-phosphate = a 1-acyl-sn-glycero-3-phosphate + phosphate. Its pathway is lipid metabolism; phospholipid metabolism. Its function is as follows. Catalyzes the transfer of an acyl group from acyl-phosphate (acyl-PO(4)) to glycerol-3-phosphate (G3P) to form lysophosphatidic acid (LPA). This enzyme utilizes acyl-phosphate as fatty acyl donor, but not acyl-CoA or acyl-ACP. In Streptococcus pneumoniae (strain ATCC 700669 / Spain 23F-1), this protein is Glycerol-3-phosphate acyltransferase.